A 227-amino-acid polypeptide reads, in one-letter code: uncharacterized protein (227 aa).

Transmembrane regions (helical) follow at residues 12-32 and 80-100; these read IVLF…YLYA and IILI…KIPL.

The protein resides in the cell membrane. This is an uncharacterized protein from Methanocaldococcus jannaschii (strain ATCC 43067 / DSM 2661 / JAL-1 / JCM 10045 / NBRC 100440) (Methanococcus jannaschii).